The primary structure comprises 289 residues: D-alanine aminotransferase (289 aa).

Tyrosine 31 serves as a coordination point for substrate. Position 50 (arginine 50) interacts with pyridoxal 5'-phosphate. Substrate contacts are provided by arginine 99 and histidine 101. Lysine 147 carries the post-translational modification N6-(pyridoxal phosphate)lysine. Glutamate 179 contributes to the pyridoxal 5'-phosphate binding site.

Belongs to the class-IV pyridoxal-phosphate-dependent aminotransferase family. In terms of assembly, homodimer. Pyridoxal 5'-phosphate is required as a cofactor.

It carries out the reaction D-alanine + 2-oxoglutarate = D-glutamate + pyruvate. In terms of biological role, acts on the D-isomers of alanine, leucine, aspartate, glutamate, aminobutyrate, norvaline and asparagine. The enzyme transfers an amino group from a substrate D-amino acid to the pyridoxal phosphate cofactor to form pyridoxamine and an alpha-keto acid in the first half-reaction. The second half-reaction is the reverse of the first, transferring the amino group from the pyridoxamine to a second alpha-keto acid to form the product D-amino acid via a ping-pong mechanism. This is an important process in the formation of D-alanine and D-glutamate, which are essential bacterial cell wall components. This is D-alanine aminotransferase (dat) from Listeria monocytogenes serotype 1/2a (strain 10403S).